Here is a 267-residue protein sequence, read N- to C-terminus: Mannose-specific lectin 1 (267 aa).

Positions Met-1–Ala-24 are cleaved as a signal peptide. 2 consecutive Bulb-type lectin domains span residues Asn-26–Arg-136 and Arg-150–Arg-260. 2 disulfide bridges follow: Cys-54–Cys-76 and Cys-178–Cys-203.

In terms of assembly, heterotetramer of 2 domain 1 and 2 domain 2 chains arranged as a dimer of domain 1/domain 2 heterodimers.

Functionally, mannose-specific lectin. Has weak agglutinating activity towards trypsin-treated erythrocytes from rabbit but not from human. The polypeptide is Mannose-specific lectin 1 (Crocus vernus (Dutch crocus)).